A 360-amino-acid polypeptide reads, in one-letter code: MENQDTEQSQKRSGSEVEKDDFKRQKVVVPEGMTKREYKRQLKQQRWEETKDEYKQKKREKKKAARERRKERIKEAEANGETNEELYNYHQMKRAKVAPQEQIDTDVKIIMDCEFDSLMNDKEIVSLSNQITRSYSAKKHSTYDVQLDITSFNKNLKKRFEKAIPQYDKWTNVTFVENDKLEDILPMDDKQALSKYVYLTADTDEVIDTLEPHHTYIIGGIVDKNRYKNLCLNKAQSLGLKIGRLPIDKFIKMNGRQVLATSHVFELCCKWFENDKDWGKAFNEVLPPRKVKGKLTHGSDPEKSIEPSEVSEQPVSSEQSEQPVLSEQPVSSEQPVLSEQPVLSESSDEPSDEPSKGADH.

The segment at 1-77 (MENQDTEQSQ…RRKERIKEAE (77 aa)) is disordered. Composition is skewed to basic and acidic residues over residues 8–24 (QSQK…DFKR) and 33–55 (MTKR…DEYK). Residues 56-67 (QKKREKKKAARE) are compositionally biased toward basic residues. Basic and acidic residues predominate over residues 68 to 77 (RRKERIKEAE). One can recognise an SAM-dependent MTase TRM10-type domain in the interval 94 to 293 (RAKVAPQEQI…EVLPPRKVKG (200 aa)). Residues 199-200 (LT), G219, 223-227 (DKNRY), C231, L245, and 257-259 (QVL) each bind S-adenosyl-L-methionine. The active-site Proton acceptor is the D223. The interval 291–360 (VKGKLTHGSD…SDEPSKGADH (70 aa)) is disordered. Positions 297-306 (HGSDPEKSIE) are enriched in basic and acidic residues. The span at 307 to 324 (PSEVSEQPVSSEQSEQPV) shows a compositional bias: low complexity. Residues 328-343 (QPVSSEQPVLSEQPVL) are compositionally biased toward polar residues.

It belongs to the class IV-like SAM-binding methyltransferase superfamily. TRM10 family. As to quaternary structure, monomer.

It localises to the cytoplasm. It is found in the nucleus. It catalyses the reaction guanosine(9) in tRNA + S-adenosyl-L-methionine = N(1)-methylguanosine(9) in tRNA + S-adenosyl-L-homocysteine + H(+). Its function is as follows. S-adenosyl-L-methionine-dependent guanine N(1)-methyltransferase that catalyzes the formation of N(1)-methylguanine at position 9 (m1G9) in cytoplasmic tRNA. In Debaryomyces hansenii (strain ATCC 36239 / CBS 767 / BCRC 21394 / JCM 1990 / NBRC 0083 / IGC 2968) (Yeast), this protein is tRNA (guanine(9)-N1)-methyltransferase.